Here is a 76-residue protein sequence, read N- to C-terminus: MAKFKFKKGDTVEIIAGDDRGTKATVLAVLPKKNKVIVEGCKIVKKAIKPTEENTKGGHLNKEMPIDVSNVRKVEA.

It belongs to the universal ribosomal protein uL24 family. Part of the 50S ribosomal subunit.

Its function is as follows. One of two assembly initiator proteins, it binds directly to the 5'-end of the 23S rRNA, where it nucleates assembly of the 50S subunit. One of the proteins that surrounds the polypeptide exit tunnel on the outside of the subunit. This Sulfurimonas denitrificans (strain ATCC 33889 / DSM 1251) (Thiomicrospira denitrificans (strain ATCC 33889 / DSM 1251)) protein is Large ribosomal subunit protein uL24.